The chain runs to 821 residues: LPS-assembly protein LptD (821 aa).

Residues 1–20 (MGKRLFWTALSGLMVSAAHA) form the signal peptide.

The protein belongs to the LptD family. In terms of assembly, component of the lipopolysaccharide transport and assembly complex. Interacts with LptE and LptA.

The protein resides in the cell outer membrane. In terms of biological role, together with LptE, is involved in the assembly of lipopolysaccharide (LPS) at the surface of the outer membrane. The chain is LPS-assembly protein LptD from Chromohalobacter salexigens (strain ATCC BAA-138 / DSM 3043 / CIP 106854 / NCIMB 13768 / 1H11).